The sequence spans 151 residues: Transcriptional regulator MraZ (151 aa).

2 consecutive SpoVT-AbrB domains span residues 5–52 (ANAV…PLDE) and 81–124 (AVDL…DEDA).

It belongs to the MraZ family. As to quaternary structure, forms oligomers.

It localises to the cytoplasm. The protein localises to the nucleoid. This Pseudomonas putida (strain W619) protein is Transcriptional regulator MraZ.